A 98-amino-acid chain; its full sequence is NADH-ubiquinone oxidoreductase chain 4L (98 aa).

The next 3 membrane-spanning stretches (helical) occupy residues 1 to 21 (MSMV…GLLM), 29 to 49 (SLLC…VTIL), and 61 to 81 (IILL…LVMV).

This sequence belongs to the complex I subunit 4L family. As to quaternary structure, core subunit of respiratory chain NADH dehydrogenase (Complex I) which is composed of 45 different subunits.

It is found in the mitochondrion inner membrane. It catalyses the reaction a ubiquinone + NADH + 5 H(+)(in) = a ubiquinol + NAD(+) + 4 H(+)(out). Core subunit of the mitochondrial membrane respiratory chain NADH dehydrogenase (Complex I) which catalyzes electron transfer from NADH through the respiratory chain, using ubiquinone as an electron acceptor. Part of the enzyme membrane arm which is embedded in the lipid bilayer and involved in proton translocation. The chain is NADH-ubiquinone oxidoreductase chain 4L (MT-ND4L) from Pusa hispida (Ringed seal).